We begin with the raw amino-acid sequence, 308 residues long: Probable manganese-dependent inorganic pyrophosphatase (308 aa).

Residues histidine 9, aspartate 13, aspartate 15, aspartate 75, histidine 97, and aspartate 149 each contribute to the Mn(2+) site.

This sequence belongs to the PPase class C family. It depends on Mn(2+) as a cofactor.

It localises to the cytoplasm. It carries out the reaction diphosphate + H2O = 2 phosphate + H(+). In Enterococcus faecalis (strain ATCC 700802 / V583), this protein is Probable manganese-dependent inorganic pyrophosphatase.